A 355-amino-acid polypeptide reads, in one-letter code: Probable GTP 3',8-cyclase (355 aa).

Residues 5–233 (AYGRPLKDLR…GRLHNRRVYR (229 aa)) form the Radical SAM core domain. Arginine 14 contacts GTP. Cysteine 21, cysteine 25, and cysteine 28 together coordinate [4Fe-4S] cluster. Lysine 69 provides a ligand contact to GTP. Glycine 73 provides a ligand contact to S-adenosyl-L-methionine. GTP is bound at residue threonine 97. Serine 121 contributes to the S-adenosyl-L-methionine binding site. Lysine 157 is a GTP binding site. Cysteine 252 and cysteine 255 together coordinate [4Fe-4S] cluster. 257 to 259 (RVR) provides a ligand contact to GTP. Cysteine 269 contributes to the [4Fe-4S] cluster binding site.

The protein belongs to the radical SAM superfamily. MoaA family. [4Fe-4S] cluster serves as cofactor.

It catalyses the reaction GTP + AH2 + S-adenosyl-L-methionine = (8S)-3',8-cyclo-7,8-dihydroguanosine 5'-triphosphate + 5'-deoxyadenosine + L-methionine + A + H(+). Its pathway is cofactor biosynthesis; molybdopterin biosynthesis. Its function is as follows. Catalyzes the cyclization of GTP to (8S)-3',8-cyclo-7,8-dihydroguanosine 5'-triphosphate. The sequence is that of Probable GTP 3',8-cyclase from Aeropyrum pernix (strain ATCC 700893 / DSM 11879 / JCM 9820 / NBRC 100138 / K1).